The chain runs to 943 residues: AP-1 complex subunit beta-1 (943 aa).

The residue at position 318 (Lys-318) is an N6-acetyllysine. Tyr-574 is subject to 3'-nitrotyrosine. Residues 584 to 621 (GGRGVVHKSLPPRTASSESTESPETAPAGAPAGDQPDV) form a disordered region. Over residues 594–616 (PPRTASSESTESPETAPAGAPAG) the composition is skewed to low complexity.

The protein belongs to the adaptor complexes large subunit family. In terms of assembly, adaptor protein complex 1 (AP-1) is a heterotetramer composed of two large adaptins (gamma-type subunit AP1G1 and beta-type subunit AP1B1), a medium adaptin (mu-type subunit AP1M1 or AP1M2) and a small adaptin (sigma-type subunit AP1S1 or AP1S2 or AP1S3). As to expression, widely expressed.

Its subcellular location is the cytoplasmic vesicle. The protein localises to the clathrin-coated vesicle membrane. It is found in the golgi apparatus. Functionally, subunit of clathrin-associated adaptor protein complex 1 that plays a role in protein sorting in the late-Golgi/trans-Golgi network (TGN) and/or endosomes. The AP complexes mediate both the recruitment of clathrin to membranes and the recognition of sorting signals within the cytosolic tails of transmembrane cargo molecules. This Mus musculus (Mouse) protein is AP-1 complex subunit beta-1 (Ap1b1).